The chain runs to 629 residues: tRNA uridine 5-carboxymethylaminomethyl modification enzyme MnmG (629 aa).

13–18 (GGGHAG) is an FAD binding site. 273 to 287 (GPRYCPSIEDKITRF) lines the NAD(+) pocket.

Belongs to the MnmG family. In terms of assembly, homodimer. Heterotetramer of two MnmE and two MnmG subunits. It depends on FAD as a cofactor.

Its subcellular location is the cytoplasm. Its function is as follows. NAD-binding protein involved in the addition of a carboxymethylaminomethyl (cmnm) group at the wobble position (U34) of certain tRNAs, forming tRNA-cmnm(5)s(2)U34. This chain is tRNA uridine 5-carboxymethylaminomethyl modification enzyme MnmG, found in Colwellia psychrerythraea (strain 34H / ATCC BAA-681) (Vibrio psychroerythus).